The following is a 266-amino-acid chain: Undecaprenyl-diphosphatase (266 aa).

8 consecutive transmembrane segments (helical) span residues 4 to 24 (LATI…PVSS), 41 to 61 (GSAA…LVAY), 79 to 99 (AVAF…VGAV), 108 to 128 (LESP…ILAI), 143 to 163 (MPLR…IPGV), 184 to 204 (AEFS…YSLW), 220 to 240 (IGLF…VAIV), and 243 to 263 (FGFA…LLWL).

Belongs to the UppP family.

It is found in the cell inner membrane. It catalyses the reaction di-trans,octa-cis-undecaprenyl diphosphate + H2O = di-trans,octa-cis-undecaprenyl phosphate + phosphate + H(+). In terms of biological role, catalyzes the dephosphorylation of undecaprenyl diphosphate (UPP). Confers resistance to bacitracin. The chain is Undecaprenyl-diphosphatase from Sphingopyxis alaskensis (strain DSM 13593 / LMG 18877 / RB2256) (Sphingomonas alaskensis).